Reading from the N-terminus, the 548-residue chain is ATP synthase subunit alpha (548 aa).

172–179 is a binding site for ATP; sequence GDRKTGKT.

Belongs to the ATPase alpha/beta chains family. As to quaternary structure, F-type ATPases have 2 components, CF(1) - the catalytic core - and CF(0) - the membrane proton channel. CF(1) has five subunits: alpha(3), beta(3), gamma(1), delta(1), epsilon(1). CF(0) has three main subunits: a(1), b(2) and c(9-12). The alpha and beta chains form an alternating ring which encloses part of the gamma chain. CF(1) is attached to CF(0) by a central stalk formed by the gamma and epsilon chains, while a peripheral stalk is formed by the delta and b chains.

Its subcellular location is the cell membrane. The catalysed reaction is ATP + H2O + 4 H(+)(in) = ADP + phosphate + 5 H(+)(out). In terms of biological role, produces ATP from ADP in the presence of a proton gradient across the membrane. The alpha chain is a regulatory subunit. The sequence is that of ATP synthase subunit alpha from Mycolicibacterium smegmatis (strain ATCC 700084 / mc(2)155) (Mycobacterium smegmatis).